We begin with the raw amino-acid sequence, 99 residues long: Putative pterin-4-alpha-carbinolamine dehydratase (99 aa).

This sequence belongs to the pterin-4-alpha-carbinolamine dehydratase family.

It catalyses the reaction (4aS,6R)-4a-hydroxy-L-erythro-5,6,7,8-tetrahydrobiopterin = (6R)-L-erythro-6,7-dihydrobiopterin + H2O. This is Putative pterin-4-alpha-carbinolamine dehydratase from Saccharolobus islandicus (strain M.16.27) (Sulfolobus islandicus).